The chain runs to 207 residues: ATP-dependent Clp protease proteolytic subunit (207 aa).

Ser-111 functions as the Nucleophile in the catalytic mechanism. Residue His-136 is part of the active site.

It belongs to the peptidase S14 family. Fourteen ClpP subunits assemble into 2 heptameric rings which stack back to back to give a disk-like structure with a central cavity, resembling the structure of eukaryotic proteasomes.

It localises to the cytoplasm. The enzyme catalyses Hydrolysis of proteins to small peptides in the presence of ATP and magnesium. alpha-casein is the usual test substrate. In the absence of ATP, only oligopeptides shorter than five residues are hydrolyzed (such as succinyl-Leu-Tyr-|-NHMec, and Leu-Tyr-Leu-|-Tyr-Trp, in which cleavage of the -Tyr-|-Leu- and -Tyr-|-Trp bonds also occurs).. In terms of biological role, cleaves peptides in various proteins in a process that requires ATP hydrolysis. Has a chymotrypsin-like activity. Plays a major role in the degradation of misfolded proteins. This chain is ATP-dependent Clp protease proteolytic subunit, found in Burkholderia mallei (strain ATCC 23344).